We begin with the raw amino-acid sequence, 139 residues long: Coat protein TP2 (139 aa).

The protein localises to the virion. The sequence is that of Coat protein TP2 from Thermoproteus tenax virus 1 (strain KRA1) (TTV1).